A 567-amino-acid polypeptide reads, in one-letter code: Monodechloroaminopyrrolnitrin halogenase PrnC (567 aa).

The protein operates within antibiotic biosynthesis. Functionally, involved in the biosynthesis of the antifungal antibiotic pyrrolnitrin. Catalyzes the chlorination of monodechloroaminopyrrolnitrin (MDA) at the 3 position to form aminopyrrolnitrin (APRN). The sequence is that of Monodechloroaminopyrrolnitrin halogenase PrnC (prnC) from Pseudomonas fluorescens.